Consider the following 149-residue polypeptide: Putative pre-16S rRNA nuclease (149 aa).

The protein belongs to the YqgF nuclease family.

The protein localises to the cytoplasm. In terms of biological role, could be a nuclease involved in processing of the 5'-end of pre-16S rRNA. The protein is Putative pre-16S rRNA nuclease of Burkholderia multivorans (strain ATCC 17616 / 249).